The following is a 574-amino-acid chain: uncharacterized protein (574 aa).

Positions 297-317 are disordered; it reads SAASKPRKRKKDEVSGAQVNS.

This is an uncharacterized protein from Mus musculus (Mouse).